The sequence spans 211 residues: uncharacterized protein (211 aa).

An N-terminal signal peptide occupies residues 1–27 (MKRTSAALVVFLILLFLGLLFLPMFIV).

This is an uncharacterized protein from Archaeoglobus fulgidus (strain ATCC 49558 / DSM 4304 / JCM 9628 / NBRC 100126 / VC-16).